Here is a 59-residue protein sequence, read N- to C-terminus: Large ribosomal subunit protein uL30 (59 aa).

It belongs to the universal ribosomal protein uL30 family. Part of the 50S ribosomal subunit.

In Escherichia coli (strain UTI89 / UPEC), this protein is Large ribosomal subunit protein uL30.